We begin with the raw amino-acid sequence, 511 residues long: Bifunctional purine biosynthesis protein PurH (511 aa).

The 145-residue stretch at 1 to 145 folds into the MGS-like domain; sequence MKKRALVSVS…KNHKFVSVIV (145 aa).

Belongs to the PurH family.

It carries out the reaction (6R)-10-formyltetrahydrofolate + 5-amino-1-(5-phospho-beta-D-ribosyl)imidazole-4-carboxamide = 5-formamido-1-(5-phospho-D-ribosyl)imidazole-4-carboxamide + (6S)-5,6,7,8-tetrahydrofolate. It catalyses the reaction IMP + H2O = 5-formamido-1-(5-phospho-D-ribosyl)imidazole-4-carboxamide. It participates in purine metabolism; IMP biosynthesis via de novo pathway; 5-formamido-1-(5-phospho-D-ribosyl)imidazole-4-carboxamide from 5-amino-1-(5-phospho-D-ribosyl)imidazole-4-carboxamide (10-formyl THF route): step 1/1. The protein operates within purine metabolism; IMP biosynthesis via de novo pathway; IMP from 5-formamido-1-(5-phospho-D-ribosyl)imidazole-4-carboxamide: step 1/1. In Bacillus cereus (strain 03BB102), this protein is Bifunctional purine biosynthesis protein PurH.